A 146-amino-acid polypeptide reads, in one-letter code: UPF0260 protein VP2169 (146 aa).

The protein belongs to the UPF0260 family.

The chain is UPF0260 protein VP2169 from Vibrio parahaemolyticus serotype O3:K6 (strain RIMD 2210633).